A 432-amino-acid polypeptide reads, in one-letter code: Histidinol dehydrogenase (432 aa).

Positions 130, 191, and 214 each coordinate NAD(+). Substrate is bound by residues Ser-237, Gln-259, and His-262. Residues Gln-259 and His-262 each contribute to the Zn(2+) site. Active-site proton acceptor residues include Glu-327 and His-328. 4 residues coordinate substrate: His-328, Asp-361, Glu-415, and His-420. Asp-361 contacts Zn(2+). His-420 contacts Zn(2+).

It belongs to the histidinol dehydrogenase family. Zn(2+) is required as a cofactor.

It carries out the reaction L-histidinol + 2 NAD(+) + H2O = L-histidine + 2 NADH + 3 H(+). The protein operates within amino-acid biosynthesis; L-histidine biosynthesis; L-histidine from 5-phospho-alpha-D-ribose 1-diphosphate: step 9/9. Catalyzes the sequential NAD-dependent oxidations of L-histidinol to L-histidinaldehyde and then to L-histidine. This chain is Histidinol dehydrogenase, found in Agrobacterium fabrum (strain C58 / ATCC 33970) (Agrobacterium tumefaciens (strain C58)).